The following is a 1019-amino-acid chain: Serine/threonine-protein kinase 31 (1019 aa).

Residues 78-137 (NLDPNKIYGGLFSEDQCWYRCKVLKIISVEKCLVRYIDYGNTEILNRSDIVEIPLELQFS) form the Tudor domain. A coiled-coil region spans residues 298–355 (EKIKQDQKLIEENEKLKTEKDALLESYKALELKVEQIAQELQQEKAAAVDLTNHLEYT). One can recognise a Protein kinase domain in the interval 710–1019 (IGLLKYMNSG…TRNGEANFDC (310 aa)). ATP contacts are provided by residues 716-724 (MNSGGLLTM) and K737.

This sequence belongs to the protein kinase superfamily. Ser/Thr protein kinase family. In terms of tissue distribution, testis specific.

It carries out the reaction L-seryl-[protein] + ATP = O-phospho-L-seryl-[protein] + ADP + H(+). The catalysed reaction is L-threonyl-[protein] + ATP = O-phospho-L-threonyl-[protein] + ADP + H(+). This Homo sapiens (Human) protein is Serine/threonine-protein kinase 31 (STK31).